We begin with the raw amino-acid sequence, 288 residues long: Polyamine aminopropyltransferase (288 aa).

The PABS domain maps to 9 to 238 (ETLHDQFGQY…GIMTFAWATD (230 aa)). S-methyl-5'-thioadenosine is bound at residue Gln-33. Positions 64 and 88 each coordinate spermidine. S-methyl-5'-thioadenosine-binding positions include Glu-108 and 140-141 (DG). Asp-158 serves as the catalytic Proton acceptor. Residue 158–161 (DCTD) participates in spermidine binding. Residue Pro-165 coordinates S-methyl-5'-thioadenosine.

It belongs to the spermidine/spermine synthase family. Homodimer or homotetramer.

It is found in the cytoplasm. The enzyme catalyses S-adenosyl 3-(methylsulfanyl)propylamine + putrescine = S-methyl-5'-thioadenosine + spermidine + H(+). The protein operates within amine and polyamine biosynthesis; spermidine biosynthesis; spermidine from putrescine: step 1/1. Functionally, catalyzes the irreversible transfer of a propylamine group from the amino donor S-adenosylmethioninamine (decarboxy-AdoMet) to putrescine (1,4-diaminobutane) to yield spermidine. The sequence is that of Polyamine aminopropyltransferase from Escherichia coli (strain UTI89 / UPEC).